We begin with the raw amino-acid sequence, 368 residues long: Protein-glutamate methylesterase/protein-glutamine glutaminase 2 (368 aa).

Positions 6 to 123 (KVLLVDDSAV…KEYLESAAGE (118 aa)) constitute a Response regulatory domain. D57 carries the 4-aspartylphosphate modification. In terms of domain architecture, CheB-type methylesterase spans 169–355 (IAGANKIAAL…SLERIPQCVL (187 aa)). Residues S181, H207, and D303 contribute to the active site.

Belongs to the CheB family. Post-translationally, phosphorylated by CheA. Phosphorylation of the N-terminal regulatory domain activates the methylesterase activity.

The protein resides in the cytoplasm. It catalyses the reaction [protein]-L-glutamate 5-O-methyl ester + H2O = L-glutamyl-[protein] + methanol + H(+). The catalysed reaction is L-glutaminyl-[protein] + H2O = L-glutamyl-[protein] + NH4(+). Functionally, involved in chemotaxis. Part of a chemotaxis signal transduction system that modulates chemotaxis in response to various stimuli. Catalyzes the demethylation of specific methylglutamate residues introduced into the chemoreceptors (methyl-accepting chemotaxis proteins or MCP) by CheR. Also mediates the irreversible deamidation of specific glutamine residues to glutamic acid. The protein is Protein-glutamate methylesterase/protein-glutamine glutaminase 2 of Hahella chejuensis (strain KCTC 2396).